The following is a 344-amino-acid chain: Galactinol synthase 1 (344 aa).

Lys-111 is a catalytic residue. Mn(2+)-binding residues include Asp-127, Asp-129, and His-265.

The protein belongs to the glycosyltransferase 8 family. Galactosyltransferase subfamily. It depends on a divalent metal cation as a cofactor. As to expression, accumulates in mature seeds. Expressed in seedlings (axes and cotyledons), meristems, vascular tissues and emerging lateral roots. Present in abscission zones.

It is found in the cytoplasm. The enzyme catalyses myo-inositol + UDP-alpha-D-galactose = alpha-D-galactosyl-(1-&gt;3)-1D-myo-inositol + UDP + H(+). Functionally, galactinol synthase involved in the biosynthesis of raffinose family oligosaccharides (RFOs) that function as osmoprotectants. Promotes plant stress tolerance such as heat, chilling, salinity and methylviologen (MV), a superoxide radical generating drug, by mediating raffinose accumulation, an osmoprotective substance. The sequence is that of Galactinol synthase 1 (GOLS1) from Arabidopsis thaliana (Mouse-ear cress).